The following is a 362-amino-acid chain: [LysW]-lysine hydrolase (362 aa).

Histidine 69 provides a ligand contact to Zn(2+). Aspartate 71 is an active-site residue. Aspartate 94 is a Zn(2+) binding site. Glutamate 127 (proton acceptor) is an active-site residue. Residues glutamate 128, glutamate 151, and histidine 334 each coordinate Zn(2+).

It belongs to the peptidase M20A family. LysK subfamily. Zn(2+) is required as a cofactor. Requires Co(2+) as cofactor.

It is found in the cytoplasm. The catalysed reaction is [amino-group carrier protein]-C-terminal-gamma-(L-lysyl)-L-glutamate + H2O = [amino-group carrier protein]-C-terminal-L-glutamate + L-lysine. The protein operates within amino-acid biosynthesis; L-lysine biosynthesis via AAA pathway; L-lysine from L-alpha-aminoadipate (Thermus route): step 5/5. Functionally, catalyzes the release of L-lysine from [LysW]-gamma-L-lysine. This Deinococcus radiodurans (strain ATCC 13939 / DSM 20539 / JCM 16871 / CCUG 27074 / LMG 4051 / NBRC 15346 / NCIMB 9279 / VKM B-1422 / R1) protein is [LysW]-lysine hydrolase.